Reading from the N-terminus, the 546-residue chain is Nuclear pore complex protein Nup58 (546 aa).

Tandem repeats lie at residues 22 to 23, 36 to 37, 45 to 46, 64 to 65, 73 to 74, 82 to 83, 92 to 93, 101 to 102, 110 to 111, 119 to 120, 128 to 129, 137 to 138, 146 to 147, 155 to 156, 166 to 167, 197 to 198, and 199 to 200. Residues 22-200 are 17 X 2 AA repeats of F-G; it reads FGARPATTTA…TTAPPAFGFG (179 aa).

The protein belongs to the NUP58 family. As to quaternary structure, component of the nuclear pore complex. Interacts with Nup54. Interacts (via C-terminus) with fs(1)Yb; this interaction occurs in a RNA-independent manner. Interacts with sbr/nxf1. Interacts with Nxt1. O-glycosylated; contains O-GlcNAc. O-GlcNAcylation increases with increasing ambient temperature.

It is found in the nucleus. It localises to the nuclear pore complex. Its function is as follows. Component of the nuclear pore complex, a complex required for the trafficking across the nuclear membrane. Together with Nup54, required for transposable element silencing regulation in ovarian follicle cells. By interacting with the nuclear (Nxf1/Nxt1) and cytosolic (fs(1)Yb) components of the flamenco (flam) transcripts processing pathway, enables export and subsequent piRNA production. The polypeptide is Nuclear pore complex protein Nup58 (Drosophila melanogaster (Fruit fly)).